Consider the following 473-residue polypeptide: Photosystem II CP43 reaction center protein (473 aa).

A propeptide spanning residues 1-14 (MKTLYSLRRFYPVE) is cleaved from the precursor. N-acetylthreonine is present on T15. Position 15 is a phosphothreonine (T15). 5 helical membrane passes run 69-93 (LFEV…PHLA), 134-155 (LLGP…KDRN), 178-200 (KALY…RRIT), 255-275 (KPFA…LSYS), and 291-312 (WFNN…ASQA). E367 contacts [CaMn4O5] cluster. Residues 447-471 (RARAAAAGFEKGIDRDFEPVLSMTP) traverse the membrane as a helical segment.

It belongs to the PsbB/PsbC family. PsbC subfamily. As to quaternary structure, PSII is composed of 1 copy each of membrane proteins PsbA, PsbB, PsbC, PsbD, PsbE, PsbF, PsbH, PsbI, PsbJ, PsbK, PsbL, PsbM, PsbT, PsbX, PsbY, PsbZ, Psb30/Ycf12, at least 3 peripheral proteins of the oxygen-evolving complex and a large number of cofactors. It forms dimeric complexes. Binds multiple chlorophylls and provides some of the ligands for the Ca-4Mn-5O cluster of the oxygen-evolving complex. It may also provide a ligand for a Cl- that is required for oxygen evolution. PSII binds additional chlorophylls, carotenoids and specific lipids. is required as a cofactor.

It is found in the plastid. Its subcellular location is the chloroplast thylakoid membrane. Functionally, one of the components of the core complex of photosystem II (PSII). It binds chlorophyll and helps catalyze the primary light-induced photochemical processes of PSII. PSII is a light-driven water:plastoquinone oxidoreductase, using light energy to abstract electrons from H(2)O, generating O(2) and a proton gradient subsequently used for ATP formation. The chain is Photosystem II CP43 reaction center protein from Illicium oligandrum (Star anise).